The primary structure comprises 155 residues: MKLLIVAVGQRVPDWAQTAYDDYAKRFPPELKVELKAVKTEPRGSKTLETLYAAERERIEAAIPRGTRVVVLDERGTGLTTKALAQRLKDWQLGGDDVALVIGGPDGLDPAFRQAAHERIRLSDLTLPHAMVRVLLIEQLYRAWSVNAGHPYHRE.

S-adenosyl-L-methionine is bound by residues leucine 72, glycine 103, and leucine 122 to leucine 127.

The protein belongs to the RNA methyltransferase RlmH family. In terms of assembly, homodimer.

It is found in the cytoplasm. The enzyme catalyses pseudouridine(1915) in 23S rRNA + S-adenosyl-L-methionine = N(3)-methylpseudouridine(1915) in 23S rRNA + S-adenosyl-L-homocysteine + H(+). In terms of biological role, specifically methylates the pseudouridine at position 1915 (m3Psi1915) in 23S rRNA. This Acidovorax sp. (strain JS42) protein is Ribosomal RNA large subunit methyltransferase H.